Reading from the N-terminus, the 181-residue chain is Ras-like protein 1 (181 aa).

GTP is bound at residue 10–17 (GAGGVGKS). The Effector region motif lies at 32–40 (YDPTIEDSY). GTP contacts are provided by residues 57–61 (DTAGQ) and 116–119 (NKCD). Cys-178 is modified (cysteine methyl ester). A lipid anchor (S-geranylgeranyl cysteine) is attached at Cys-178. Positions 179-181 (KML) are cleaved as a propeptide — removed in mature form.

Belongs to the small GTPase superfamily. Ras family.

It localises to the cell membrane. The enzyme catalyses GTP + H2O = GDP + phosphate + H(+). With respect to regulation, alternates between an inactive form bound to GDP and an active form bound to GTP. Activated by a guanine nucleotide-exchange factor (GEF) and inactivated by a GTPase-activating protein (GAP). In terms of biological role, ras proteins bind GDP/GTP and possess intrinsic GTPase activity. Plays a role in eye development by regulating cell growth, survival of postmitotic ommatidial cells and differentiation of photoreceptor cells. During larval development, mediates Ptth/tor signaling leading to the production of ecdysone, a hormone required for the initiation of metamorphosis. This is Ras-like protein 1 from Drosophila mojavensis (Fruit fly).